Consider the following 172-residue polypeptide: Adenine phosphoribosyltransferase (172 aa).

Belongs to the purine/pyrimidine phosphoribosyltransferase family. In terms of assembly, homodimer.

It localises to the cytoplasm. It catalyses the reaction AMP + diphosphate = 5-phospho-alpha-D-ribose 1-diphosphate + adenine. The protein operates within purine metabolism; AMP biosynthesis via salvage pathway; AMP from adenine: step 1/1. Catalyzes a salvage reaction resulting in the formation of AMP, that is energically less costly than de novo synthesis. This chain is Adenine phosphoribosyltransferase, found in Clostridium botulinum (strain Loch Maree / Type A3).